A 290-amino-acid polypeptide reads, in one-letter code: Beta carbonic anhydrase 6, mitochondrial (290 aa).

A mitochondrion-targeting transit peptide spans 1–20; it reads MAFTLGGRARRLVSATSVHQ. Position 122 is a phosphoserine (Ser-122). Cys-226 is modified (S-nitrosocysteine).

This sequence belongs to the beta-class carbonic anhydrase family. In terms of tissue distribution, strongly expressed in aerial tissues including leaves, stems, flowers and siliques, and, to a lower extent, in roots. Accumulates in guard cells.

It localises to the mitochondrion. The catalysed reaction is hydrogencarbonate + H(+) = CO2 + H2O. Functionally, reversible hydration of carbon dioxide. This is Beta carbonic anhydrase 6, mitochondrial (BCA6) from Arabidopsis thaliana (Mouse-ear cress).